We begin with the raw amino-acid sequence, 442 residues long: Protein PHYTOCHROME KINASE SUBSTRATE 2 (442 aa).

The tract at residues 110 to 130 is disordered; sequence IFVGPKQSSKNSSETPSLRSE. Over residues 121–130 the composition is skewed to low complexity; sequence SSETPSLRSE. A phosphoserine mark is found at Ser239 and Ser245. Residues 394–442 form a disordered region; that stretch reads VSGDSYTSMNRTPSYVPRFPVEANPTSTETRRRISSSSVSHTQSPFLYT. Polar residues predominate over residues 397 to 406; the sequence is DSYTSMNRTP. A compositionally biased stretch (low complexity) spans 428–442; sequence SSSSVSHTQSPFLYT.

Belongs to the PKS family. As to quaternary structure, interacts with PKS1, RPT3, PHOT1 and PHOT2. In terms of tissue distribution, expressed in leaves, with the strongest expression on edges of the laminas. Not found in roots.

The protein resides in the cell membrane. Its function is as follows. Acts predominantly in the phot1 pathway. Involved in the leaf positioning and also in the phot2 pathway controlling the leaf flattening. Component of the network that modulates the very low-fluence response (VLFR) branch of phyA signaling. Regulates phytochrome-mediated photomorphogenesis and hypocotyl phototropism. May act by controlling auxin homeostasis. The sequence is that of Protein PHYTOCHROME KINASE SUBSTRATE 2 (PKS2) from Arabidopsis thaliana (Mouse-ear cress).